The chain runs to 423 residues: Vitamin D3 receptor (423 aa).

Zn(2+) contacts are provided by Cys24, Cys27, Cys41, Cys44, Cys60, Cys66, Cys76, and Cys79. 2 NR C4-type zinc fingers span residues 24–44 (CGVC…CEGC) and 60–84 (CPFN…LKRC). The nuclear receptor DNA-binding region spans 24–89 (CGVCGDRATG…RLKRCVDIGM (66 aa)). The interval 97–126 (DEEVQRKREMIMKRKEEEALKDSLRPKLSE) is hinge. An NR LBD domain is found at 127 to 419 (EQQHIIAILL…LTPLVLEVFG (293 aa)). Tyr143 is a binding site for calcitriol. Residues 159–180 (MDGSTGSYSPRPTLSFSGNSSS) form a disordered region. Low complexity predominate over residues 171 to 180 (TLSFSGNSSS). Residue Ser233 coordinates calcitriol. The tract at residues 242–260 (KMIPGFRDLTSDDQIVLLK) is interaction with coactivator LXXLL motif. Positions 270, 274, 301, and 393 each coordinate calcitriol. The 9aaTAD signature appears at 412-420 (PLVLEVFGN).

It belongs to the nuclear hormone receptor family. NR1 subfamily. As to quaternary structure, homodimer in the absence of bound vitamin D3. Heterodimer with RXRA after vitamin D3 binding. Interacts with MED1 and NCOA6. Interacts with MED1, NCOA1, NCOA2, NCOA3 and NCOA6 coactivators, leading to a strong increase of transcription of target genes. Interacts with the corepressor NCOR1. Interacts with SNW1. Interacts with IRX4, the interaction does not affect its transactivation activity. Interacts with CRY1. Interacts with CRY2 in a ligand-dependent manner. In terms of processing, ubiquitinated by UBR5, leading to its degradation: UBR5 specifically recognizes and binds ligand-bound VDR when it is not associated with coactivators (NCOAs). In presence of NCOAs, the UBR5-degron is not accessible, preventing its ubiquitination and degradation. As to expression, detected in intestine and kidney.

It is found in the nucleus. Its subcellular location is the cytoplasm. In terms of biological role, nuclear receptor for calcitriol, the active form of vitamin D3 which mediates the action of this vitamin on cells. Enters the nucleus upon vitamin D3 binding where it forms heterodimers with the retinoid X receptor/RXR. The VDR-RXR heterodimers bind to specific response elements on DNA and activate the transcription of vitamin D3-responsive target genes. Plays a central role in calcium homeostasis. Also functions as a receptor for the secondary bile acid lithocholic acid (LCA) and its metabolites. The polypeptide is Vitamin D3 receptor (Vdr) (Rattus norvegicus (Rat)).